Consider the following 355-residue polypeptide: Gentisate 1,2-dioxygenase (355 aa).

The Cupin type-2 domain occupies 106-174 (MQLLLPGEWA…GNEPVVWLDV (69 aa)).

This sequence belongs to the gentisate 1,2-dioxygenase family.

The enzyme catalyses 2,5-dihydroxybenzoate + O2 = 3-maleylpyruvate + H(+). It participates in aromatic compound metabolism; naphthalene degradation. In terms of biological role, catalyzes the oxygen-dependent ring fission of gentisate between the carboxyl and proximal hydroxyl groups at positions 1 and 2 of the aromatic ring to form maleylpyruvate. Can also catalyze oxidation of alkyl- and halogenated gentisates. Exhibits higher affinity for 3-substituted gentisates than for gentisate but has higher activity with gentisate. The chain is Gentisate 1,2-dioxygenase from Ralstonia sp.